A 379-amino-acid polypeptide reads, in one-letter code: Deoxyhypusine synthase (379 aa).

NAD(+) contacts are provided by residues 104–108 (SNLVS), 130–132 (TAG), Glu-136, and Asp-237. Residue 135 to 136 (EE) coordinates spermidine. Asp-242 provides a ligand contact to spermidine. Residue Gly-293 participates in NAD(+) binding. His-298 is a binding site for spermidine. Residue 318–319 (TA) participates in NAD(+) binding. Spermidine-binding positions include 324–326 (GSD) and 333–339 (EAVSWGK). Lys-339 acts as the Nucleophile in catalysis. 352 to 353 (DA) lines the NAD(+) pocket.

This sequence belongs to the deoxyhypusine synthase family. Homotetramer. NAD(+) serves as cofactor.

It catalyses the reaction [eIF5A protein]-L-lysine + spermidine = [eIF5A protein]-deoxyhypusine + propane-1,3-diamine. It functions in the pathway protein modification; eIF5A hypusination. Functionally, catalyzes the NAD-dependent oxidative cleavage of spermidine and the subsequent transfer of the butylamine moiety of spermidine to the epsilon-amino group of a specific lysine residue of the eIF-5A precursor protein to form the intermediate deoxyhypusine residue. Also able to produce homospermidine from putrescine. The polypeptide is Deoxyhypusine synthase (DHS1) (Nicotiana tabacum (Common tobacco)).